The following is an 868-amino-acid chain: Lysosomal cholesterol signaling protein (868 aa).

Residues 1 to 36 are Lumenal-facing; sequence MDSYFSAKNSTLAGDMNATWPASHGFNATGDPPSMS. The interval 1–368 is PIN-like transporter; it reads MDSYFSAKNS…SAWLLTFPTM (368 aa). Residues asparagine 9, asparagine 17, and asparagine 27 are each glycosylated (N-linked (GlcNAc...) asparagine). The chain crosses the membrane as a helical span at residues 37–57; the sequence is ITRLFPALLECFGIVLCGYIA. Positions 41 and 55 each coordinate cholesterol. Over 58 to 77 the chain is Cytoplasmic; sequence GRANIITSTQAKGLGNFVSR. The chain crosses the membrane as a helical span at residues 78–98; sequence FALPALLFKNMVVLNFSNVDW. At 99–102 the chain is on the lumenal side; sequence AFLY. Residues 103 to 123 form a helical membrane-spanning segment; it reads SVLIGKASVFFIVCVLTLLVA. At 124–131 the chain is on the cytoplasmic side; it reads SPESRFSK. The discontinuously helical transmembrane segment at 132–152 threads the bilayer; the sequence is AGLFPIFATQSNDFALGYPIV. At 153–165 the chain is on the lumenal side; sequence EALYQSTYPEYLQ. A helical membrane pass occupies residues 166–186; that stretch reads YIYLVAPISLMMLNPIGFIFC. Residues 187–211 are Cytoplasmic-facing; the sequence is EIQKSKDTQNASQNKAKIVGLGFLR. Residues 212–232 form a discontinuously helical membrane-spanning segment; that stretch reads VLQNPIVFMVFVGIAFNFILD. Residues 233 to 241 lie on the Lumenal side of the membrane; the sequence is KKIPVYMEN. The chain crosses the membrane as a discontinuously helical span at residues 242-262; the sequence is FLDGLANSFSGSALFYLGLTM. Residues 263 to 271 lie on the Cytoplasmic side of the membrane; it reads VGKIRRLKK. Residues glycine 264, lysine 265, and isoleucine 266 each coordinate cholesterol. Residues 272 to 292 traverse the membrane as a helical segment; sequence SAFVVLTLLITAKLLVLPLLC. Over 293-313 the chain is Lumenal; sequence REMVELLDKGDSVVNHTSLSN. N-linked (GlcNAc...) asparagine glycosylation is present at asparagine 307. The chain crosses the membrane as a discontinuously helical span at residues 314 to 334; it reads YAFLYGVFPVAPGVAIFATQF. Topologically, residues 335 to 344 are cytoplasmic; that stretch reads NMEVEIITSG. A helical membrane pass occupies residues 345 to 365; that stretch reads MVISTFVSAPIMYVSAWLLTF. At 366-379 the chain is on the lumenal side; sequence PTMDAKPLAYAIQN. Residues 378-715 form a GPCR region; sequence QNVSFDISII…FGIFGLDKHL (338 aa). A glycan (N-linked (GlcNAc...) asparagine) is linked at asparagine 379. The chain crosses the membrane as a helical span at residues 380-400; the sequence is VSFDISIISLVSLIWSLSILL. Topologically, residues 401 to 412 are cytoplasmic; the sequence is LSKKYKQLPHML. Residues 413–433 form a helical membrane-spanning segment; the sequence is TANLLIAQTIVCAGMMIWNFV. Residues 434–436 are Lumenal-facing; it reads KEK. The chain crosses the membrane as a helical span at residues 437–457; it reads NFVGQILVFVLLYSSLYSTYL. Topologically, residues 458-478 are cytoplasmic; it reads WTGLLAVSLFLLKKRESVQLP. Residues 479 to 499 form a helical membrane-spanning segment; sequence VGIIIISGWGIPALLVGVLLI. Over 500-518 the chain is Lumenal; sequence TGKHNGDSIDSAFFYGKEQ. A helical membrane pass occupies residues 519–539; it reads MITTAVTLFCSILIAGVSLMC. The Cytoplasmic segment spans residues 540–658; that stretch reads MNRTTQAGHY…GDPQLTRHVL (119 aa). A disordered region spans residues 550–582; the sequence is EGFGQSQNHKPVEPGSTAFEENPAPTNEPELFP. Cholesterol is bound at residue arginine 655. A helical transmembrane segment spans residues 659-679; the sequence is LCLLLIIGLFANLSSCLWWLF. The Lumenal segment spans residues 680-689; that stretch reads NHETGRLYVE. The chain crosses the membrane as a helical span at residues 690–710; that stretch reads LQFFCAVFNFGQGFISFGIFG. Over 711-868 the chain is Cytoplasmic; the sequence is LDKHLIILPF…SSPPSVSPKT (158 aa). The DEP domain occupies 755–833; the sequence is YHRDLCIRNI…DEYLFYRFLQ (79 aa). Residues 836–868 form a disordered region; that stretch reads PEQSPPARTLRDHQEESYKEIGHSSPPSVSPKT. The segment covering 844–857 has biased composition (basic and acidic residues); the sequence is TLRDHQEESYKEIG.

As to quaternary structure, homodimer; via the transporter region and DEP domain. Interacts with the GATOR1 complex; preventing interaction between GATOR1 and KICSTOR; interaction is disrupted upon cholesterol starvation. Widely expressed in adult tissues and during development. In brain, widely distributed in forebrain regions, while it shows a more restricted distribution in the midbrain and hindbrain regions. Expressed at highest level in the lateral part of striatum and hippocampus.

The protein resides in the lysosome membrane. Its function is as follows. Cholesterol-binding protein that acts as a regulator of mTORC1 signaling pathway. Acts as a sensor of cholesterol to signal cholesterol sufficiency to mTORC1: in presence of cholesterol, binds cholesterol, leading to disruption of the interaction between the GATOR1 and KICSTOR complexes and promotion of mTORC1 signaling. Upon cholesterol starvation, GPR155/LYCHOS is unable to perturb the association between GATOR1 and KICSTOR, leading to mTORC1 signaling inhibition. Binds indole-3-acetic acid and may play a role in tryptophan metabolism. The chain is Lysosomal cholesterol signaling protein from Mus musculus (Mouse).